The primary structure comprises 632 residues: Mitoguardin 1 (632 aa).

Residues 70-90 (PVAKKLFVVTAVSAISVIFLA) traverse the membrane as a helical segment. Phosphoserine is present on residues Ser289 and Ser293.

The protein belongs to the mitoguardin family. In terms of assembly, homodimer and heterodimer; forms heterodimers with MIGA2. Interacts with PLD6/MitoPLD.

Its subcellular location is the mitochondrion outer membrane. In terms of biological role, regulator of mitochondrial fusion: acts by forming homo- and heterodimers at the mitochondrial outer membrane and facilitating the formation of PLD6/MitoPLD dimers. May act by regulating phospholipid metabolism via PLD6/MitoPLD. This chain is Mitoguardin 1, found in Homo sapiens (Human).